The following is a 44-amino-acid chain: Cytochrome b559 subunit beta (44 aa).

The helical transmembrane segment at 17–41 threads the bilayer; that stretch reads VRWLAVHTLAVPSVFFVGAIAAMQF. Arg18 and His23 together coordinate heme.

It belongs to the PsbE/PsbF family. As to quaternary structure, heterodimer of an alpha subunit and a beta subunit. PSII is composed of 1 copy each of membrane proteins PsbA, PsbB, PsbC, PsbD, PsbE, PsbF, PsbH, PsbI, PsbJ, PsbK, PsbL, PsbM, PsbT, PsbX, PsbY, PsbZ, Psb30/Ycf12, peripheral proteins PsbO, CyanoQ (PsbQ), PsbU, PsbV and a large number of cofactors. It forms dimeric complexes. It depends on heme b as a cofactor.

Its subcellular location is the cellular thylakoid membrane. Functionally, this b-type cytochrome is tightly associated with the reaction center of photosystem II (PSII). PSII is a light-driven water:plastoquinone oxidoreductase that uses light energy to abstract electrons from H(2)O, generating O(2) and a proton gradient subsequently used for ATP formation. It consists of a core antenna complex that captures photons, and an electron transfer chain that converts photonic excitation into a charge separation. The polypeptide is Cytochrome b559 subunit beta (Synechocystis sp. (strain ATCC 27184 / PCC 6803 / Kazusa)).